A 462-amino-acid polypeptide reads, in one-letter code: Elongation factor 1-alpha 1 (462 aa).

G2 carries the post-translational modification N,N,N-trimethylglycine. The tr-type G domain maps to 5–242 (KTHINIVVIG…DCILPPTRPT (238 aa)). Residues 14–21 (GHVDSGKS) form a G1 region. GTP is bound at residue 14–21 (GHVDSGKS). N6,N6,N6-trimethyllysine; alternate is present on K36. An N6,N6-dimethyllysine; alternate modification is found at K36. At K36 the chain carries N6-methyllysine; alternate. K55 is subject to N6,N6-dimethyllysine. The G2 stretch occupies residues 70–74 (GITID). K79 is modified (N6,N6,N6-trimethyllysine; by EEF1AKMT1). A G3 region spans residues 91–94 (DAPG). 153–156 (NKMD) contributes to the GTP binding site. A G4 region spans residues 153 to 156 (NKMD). K165 carries the post-translational modification N6,N6,N6-trimethyllysine; alternate; by EEF1AKMT3. K165 carries the post-translational modification N6,N6-dimethyllysine; alternate; by EEF1AKMT3. The residue at position 165 (K165) is an N6-acetyllysine; alternate. N6-methyllysine; alternate; by EEF1AKMT3 is present on K165. K172 carries the post-translational modification N6-acetyllysine. 194-196 (SGW) is a GTP binding site. The interval 194 to 196 (SGW) is G5. K273 carries the post-translational modification N6-acetyllysine. Residue S300 is modified to Phosphoserine; by TGFBR1. E301 bears the 5-glutamyl glycerylphosphorylethanolamine mark. Position 318 is an N6,N6,N6-trimethyllysine; by EEF1AKMT2 (K318). 5-glutamyl glycerylphosphorylethanolamine is present on E374. A Glycyl lysine isopeptide (Lys-Gly) (interchain with G-Cter in ubiquitin) cross-link involves residue K385. An N6-acetyllysine; alternate modification is found at K392. N6-succinyllysine; alternate is present on K392. T432 is modified (phosphothreonine; by PASK). K439 bears the N6-acetyllysine mark.

Belongs to the TRAFAC class translation factor GTPase superfamily. Classic translation factor GTPase family. EF-Tu/EF-1A subfamily. Found in a nuclear export complex with XPO5, EEF1A1, Ran and aminoacylated tRNA. Interacts with PARP1 and TXK. Interacts with KARS1. May interact with ERGIC2. Interacts with IFIT1 (via TPR repeats 4-7). Interacts with DLC1, facilitating distribution to the membrane periphery and ruffles upon growth factor stimulation. Interacts with ZPR1; the interaction occurs in a epidermal growth factor (EGF)-dependent manner. Interacts with PPP1R16B. Interacts with SPHK1 and SPHK2; both interactions increase SPHK1 and SPHK2 kinase activity. Interacts with guanyl-nucleotide exchange factor EEF1B2. Interacts (via middle-region) with HTATIP2 (via N-terminus); the interaction is direct and competes with EEF1A1 binding to guanyl-nucleotide exchange factor EEF1B2, thereby inhibiting GDP for GTP exchange and reactivation of EEF1A1. Interacts with tRNA. Post-translationally, ISGylated. In terms of processing, phosphorylated by TXK. Phosphorylation by PASK increases translation efficiency. Phosphorylated by ROCK2. Phosphorylation by TGFBR1 inhibits translation elongation. Trimethylated at Lys-79 by EEF1AKMT1. Methylated at Lys-165 by EEF1AKMT3, methylation by EEF1AKMT3 is dynamic as well as inducible by stress conditions, such as ER-stress, and plays a regulatory role on mRNA translation. Trimethylated at Lys-318 by EEF1AKMT2. Mono-, di-, and trimethylated at Lys-36 by EEF1AKMT4; trimethylated form is predominant. Methylation by EEF1AKMT4 contributes to the fine-tuning of translation rates for a subset of tRNAs. Trimethylated at Gly-2 by METTL13. Mono- and dimethylated at Lys-55 by METTL13; dimethylated form is predominant. Post-translationally, ubiquitinated at Lys-385 by RNF14 in response to ribosome collisions (ribosome stalling), leading to its degradation by the proteasome and rescue of stalled ribosomes.

It is found in the cytoplasm. The protein resides in the nucleus. Its subcellular location is the nucleolus. It localises to the cell membrane. The catalysed reaction is GTP + H2O = GDP + phosphate + H(+). In terms of biological role, translation elongation factor that catalyzes the GTP-dependent binding of aminoacyl-tRNA (aa-tRNA) to the A-site of ribosomes during the elongation phase of protein synthesis. Base pairing between the mRNA codon and the aa-tRNA anticodon promotes GTP hydrolysis, releasing the aa-tRNA from EEF1A1 and allowing its accommodation into the ribosome. The growing protein chain is subsequently transferred from the P-site peptidyl tRNA to the A-site aa-tRNA, extending it by one amino acid through ribosome-catalyzed peptide bond formation. Also plays a role in the positive regulation of IFNG transcription in T-helper 1 cells as part of an IFNG promoter-binding complex with TXK and PARP1. Also plays a role in cytoskeleton organization by promoting actin bundling. In Cricetulus griseus (Chinese hamster), this protein is Elongation factor 1-alpha 1 (EEF1A1).